Consider the following 368-residue polypeptide: Phosphate acyltransferase (368 aa).

The tract at residues 337-368 (LGDGEHDAGGAGQASPAAGHHAEPSAAQSSKA) is disordered.

This sequence belongs to the PlsX family. As to quaternary structure, homodimer. Probably interacts with PlsY.

Its subcellular location is the cytoplasm. The catalysed reaction is a fatty acyl-[ACP] + phosphate = an acyl phosphate + holo-[ACP]. Its pathway is lipid metabolism; phospholipid metabolism. Functionally, catalyzes the reversible formation of acyl-phosphate (acyl-PO(4)) from acyl-[acyl-carrier-protein] (acyl-ACP). This enzyme utilizes acyl-ACP as fatty acyl donor, but not acyl-CoA. In Burkholderia orbicola (strain MC0-3), this protein is Phosphate acyltransferase.